We begin with the raw amino-acid sequence, 1033 residues long: Probable beta-glucosidase E (1033 aa).

A disordered region spans residues 1 to 71; sequence MAPPDSTHGG…RSGSYKLRPV (71 aa). Residues 1–161 lie on the Cytoplasmic side of the membrane; the sequence is MAPPDSTHGG…PVKYARIWWR (161 aa). Composition is skewed to basic and acidic residues over residues 11–20 and 59–71; these read SFRDHLKTND and DLER…LRPV. A helical; Signal-anchor for type II membrane protein transmembrane segment spans residues 162 to 182; the sequence is TLLAVVVTLVVVVWGFLSFAV. Residues 183-1033 lie on the Extracellular side of the membrane; that stretch reads SHREEPTVWP…SRDLPLMGEY (851 aa). 3 N-linked (GlcNAc...) asparagine glycosylation sites follow: asparagine 224, asparagine 232, and asparagine 418. The active site involves aspartate 446. 6 N-linked (GlcNAc...) asparagine glycosylation sites follow: asparagine 489, asparagine 528, asparagine 593, asparagine 909, asparagine 918, and asparagine 976.

This sequence belongs to the glycosyl hydrolase 3 family.

It is found in the cell membrane. The catalysed reaction is Hydrolysis of terminal, non-reducing beta-D-glucosyl residues with release of beta-D-glucose.. Its pathway is glycan metabolism; cellulose degradation. In terms of biological role, beta-glucosidases are one of a number of cellulolytic enzymes involved in the degradation of cellulosic biomass. Catalyzes the last step releasing glucose from the inhibitory cellobiose. This is Probable beta-glucosidase E (bglE) from Aspergillus fumigatus (strain CBS 144.89 / FGSC A1163 / CEA10) (Neosartorya fumigata).